Reading from the N-terminus, the 417-residue chain is Interferon-gamma-inducible GTPase 10 (417 aa).

The N-myristoyl glycine moiety is linked to residue glycine 2. The 183-residue stretch at 67 to 249 (APLNIAVTGE…PSLESTLLEE (183 aa)) folds into the IRG-type G domain. GDP contacts are provided by glycine 78, alanine 79, serine 82, threonine 83, serine 101, lysine 183, aspartate 185, and serine 231. 2 helical membrane-spanning segments follow: residues 284–302 (EALK…FFND) and 370–387 (AVTG…KSYY).

It belongs to the TRAFAC class dynamin-like GTPase superfamily. GB1/RHD3 GTPase family. GB1 subfamily. In terms of assembly, homooligomer; homooligomerization occurs upon GTP-binding and is required for the association with membranous structures. Homodimer; GDP-binding induces formation of an inactive head-to-head homodimer. Myristoylation is required for localization to pathogen-containing vacuoles. Post-translationally, (Microbial infection) Phosphorylated by Toxoplasma gondii ROP18.

Its subcellular location is the membrane. It is found in the cytoplasmic vesicle membrane. The enzyme catalyses GTP + H2O = GDP + phosphate + H(+). In terms of biological role, interferon (IFN)-inducible GTPase that plays important roles in innate immunity against a diverse range of bacterial, viral and protozoan pathogens by mediating cytosolic release of pathogenic ligands that activate the inflammasomes. Following infection, recruited to the membrane of pathogens in a GBP-dependent manner and mediates disruption of the pathogen membrane, liberating ligands that are detected by inflammasomes, such as lipopolysaccharide (LPS) that activates the non-canonical CASP4/CASP11 inflammasome or double-stranded DNA (dsDNA) that activates the AIM2 inflammasome. Promotes AIM2 and NLRP3 inflammasome activation following A.fumigatus infection by liberating beta-glucan, which directly triggers inflammasome assembly. Promotes NLRP3 inflammasome activation following influenza A virus infection. The protein is Interferon-gamma-inducible GTPase 10 of Mus musculus (Mouse).